Reading from the N-terminus, the 183-residue chain is 2-epi-5-epi-valiolone epimerase (183 aa).

One can recognise a VOC domain in the interval 11–155; sequence AVHHVAYTVP…WGMQLELINL (145 aa). 4 residues coordinate a divalent metal cation: histidine 14, glutamate 76, histidine 99, and glutamate 151.

In terms of assembly, homodimer. Requires a divalent metal cation as cofactor.

It catalyses the reaction 2-epi-5-epi-valiolone = 5-epi-valiolone. The protein operates within antibiotic biosynthesis. Functionally, catalyzes the epimerization of 2-epi-5-epi-valiolone to 5-epi-valiolone. Involved in cetoniacytone A biosynthesis. This Actinomyces sp protein is 2-epi-5-epi-valiolone epimerase.